The following is a 914-amino-acid chain: MDYKDTLLMPKTDFPMRGGLPNKEPQIQAQWDEKKLYEKILKKNEGRTPYILHDGPPYANGQIHMGHALNKIIKDMIMRYKAMNGYYAPYVPGWDTHGLPIETALTKKGVDRKSMSEAEFRELCRAYALEQIELQKADFKRLGVNGDWENPYITLQEKFEAEQIRLFGDMAAKGYIYKGKKPVYWSPSSESSLAEAEIEYQDKVSPSIYVAFDVLDGKGLVDDDVKFVIWTTTPWTLPANVAIALNKDLDYVQVRVNDTSYIVAQALLDNVCDAVGWDKEGVQIEKTFKGADLEFVKARHPFIDRESLIILGDHVTTDAGTGCVHTAPGHGEDDFIVGQKYELDVISPVDGKGVYTSEAGEFEGMYYDKANKVITEKLEASGHLLKLDFFKHSYPHDWRTKKPVIFRATPQWFASINKVRQDILNAIEETEFKVEWGKTRIYNMIRDRGDWVISRQRVWGVPLPVFYAENGDIIMDKAVIEHVATLVEKHGTNVWYEREATDLLPEGYTHPGSPNGVFTKEKDIMDVWFDSGSSHRGVLEARPELSFPADLYFEGSDQYRGWFNSSITTAVATRGKSPYKKLLSHGFVMDGQGRKMSKSLGNTVLPEKVVKQMGADIIRLWVMSVDYLADVRISDDILKQVSEVYRKIRNTFKFLLGNVNDFNPATDAVPYAELVEIDQFMLNKLYTFVNNAHKHYDNNDYLFMYQELQNFINVELSNFYLDYGKDILYIEAQDSHVRRSMQTVVYEVLTSLTKVLAPIIPHTADEIWSHTPHVTEESVHLADMPEVQSVDTALIGKWNHFLEIRDDVLKAIEETRNDKVIGKSLEAAVYIQAKNEEDQALLKSFDNLHQLFITSYAEVVDEPQGTDYNLSNVLVKHAEGEKCERCWNYSTVLTEESHAHPHVCPRCLSVLESK.

The 'HIGH' region motif lies at 57 to 67 (PYANGQIHMGH). Glutamate 554 contributes to the L-isoleucyl-5'-AMP binding site. Positions 595–599 (KMSKS) match the 'KMSKS' region motif. Lysine 598 is a binding site for ATP. Cysteine 883, cysteine 886, cysteine 904, and cysteine 907 together coordinate Zn(2+).

This sequence belongs to the class-I aminoacyl-tRNA synthetase family. IleS type 1 subfamily. Monomer. Zn(2+) is required as a cofactor.

The protein localises to the cytoplasm. The catalysed reaction is tRNA(Ile) + L-isoleucine + ATP = L-isoleucyl-tRNA(Ile) + AMP + diphosphate. Its function is as follows. Catalyzes the attachment of isoleucine to tRNA(Ile). As IleRS can inadvertently accommodate and process structurally similar amino acids such as valine, to avoid such errors it has two additional distinct tRNA(Ile)-dependent editing activities. One activity is designated as 'pretransfer' editing and involves the hydrolysis of activated Val-AMP. The other activity is designated 'posttransfer' editing and involves deacylation of mischarged Val-tRNA(Ile). The polypeptide is Isoleucine--tRNA ligase (Macrococcus caseolyticus (strain JCSC5402) (Macrococcoides caseolyticum)).